The chain runs to 430 residues: Serine--tRNA ligase (430 aa).

The segment covering 45-58 (ENLQAERNSRSKSI) has biased composition (polar residues). The tract at residues 45–65 (ENLQAERNSRSKSIGQAKARG) is disordered. 237-239 (TSE) is an L-serine binding site. 268–270 (RSE) provides a ligand contact to ATP. Residue Glu-291 participates in L-serine binding. Residue 355-358 (EISS) coordinates ATP. Position 391 (Ser-391) interacts with L-serine.

Belongs to the class-II aminoacyl-tRNA synthetase family. Type-1 seryl-tRNA synthetase subfamily. In terms of assembly, homodimer. The tRNA molecule binds across the dimer.

It is found in the cytoplasm. The catalysed reaction is tRNA(Ser) + L-serine + ATP = L-seryl-tRNA(Ser) + AMP + diphosphate + H(+). It carries out the reaction tRNA(Sec) + L-serine + ATP = L-seryl-tRNA(Sec) + AMP + diphosphate + H(+). It participates in aminoacyl-tRNA biosynthesis; selenocysteinyl-tRNA(Sec) biosynthesis; L-seryl-tRNA(Sec) from L-serine and tRNA(Sec): step 1/1. Catalyzes the attachment of serine to tRNA(Ser). Is also able to aminoacylate tRNA(Sec) with serine, to form the misacylated tRNA L-seryl-tRNA(Sec), which will be further converted into selenocysteinyl-tRNA(Sec). This is Serine--tRNA ligase from Erwinia tasmaniensis (strain DSM 17950 / CFBP 7177 / CIP 109463 / NCPPB 4357 / Et1/99).